The following is a 148-amino-acid chain: Endoribonuclease YbeY (148 aa).

The Zn(2+) site is built by H113, H117, and H123.

The protein belongs to the endoribonuclease YbeY family. Zn(2+) is required as a cofactor.

It is found in the cytoplasm. Its function is as follows. Single strand-specific metallo-endoribonuclease involved in late-stage 70S ribosome quality control and in maturation of the 3' terminus of the 16S rRNA. The protein is Endoribonuclease YbeY of Borrelia turicatae (strain 91E135).